The following is a 251-amino-acid chain: 3-deoxy-manno-octulosonate cytidylyltransferase (251 aa).

This sequence belongs to the KdsB family.

The protein localises to the cytoplasm. It catalyses the reaction 3-deoxy-alpha-D-manno-oct-2-ulosonate + CTP = CMP-3-deoxy-beta-D-manno-octulosonate + diphosphate. The protein operates within nucleotide-sugar biosynthesis; CMP-3-deoxy-D-manno-octulosonate biosynthesis; CMP-3-deoxy-D-manno-octulosonate from 3-deoxy-D-manno-octulosonate and CTP: step 1/1. It functions in the pathway bacterial outer membrane biogenesis; lipopolysaccharide biosynthesis. Its function is as follows. Activates KDO (a required 8-carbon sugar) for incorporation into bacterial lipopolysaccharide in Gram-negative bacteria. The chain is 3-deoxy-manno-octulosonate cytidylyltransferase from Agrobacterium fabrum (strain C58 / ATCC 33970) (Agrobacterium tumefaciens (strain C58)).